Here is a 172-residue protein sequence, read N- to C-terminus: Phosphopantetheine adenylyltransferase (172 aa).

Position 9 (Ser9) interacts with substrate. ATP is bound by residues 9 to 10 and His17; that span reads SF. Lys41, Leu78, and Arg92 together coordinate substrate. Residues 93 to 95, Glu103, and 128 to 134 each bind ATP; these read GLR and GRAITST.

This sequence belongs to the bacterial CoaD family. As to quaternary structure, homohexamer. Mg(2+) serves as cofactor.

The protein resides in the cytoplasm. The enzyme catalyses (R)-4'-phosphopantetheine + ATP + H(+) = 3'-dephospho-CoA + diphosphate. It participates in cofactor biosynthesis; coenzyme A biosynthesis; CoA from (R)-pantothenate: step 4/5. Its function is as follows. Reversibly transfers an adenylyl group from ATP to 4'-phosphopantetheine, yielding dephospho-CoA (dPCoA) and pyrophosphate. The chain is Phosphopantetheine adenylyltransferase from Bartonella quintana (strain Toulouse) (Rochalimaea quintana).